Consider the following 96-residue polypeptide: Co-chaperonin GroES (96 aa).

This sequence belongs to the GroES chaperonin family. Heptamer of 7 subunits arranged in a ring. Interacts with the chaperonin GroEL.

The protein localises to the cytoplasm. In terms of biological role, together with the chaperonin GroEL, plays an essential role in assisting protein folding. The GroEL-GroES system forms a nano-cage that allows encapsulation of the non-native substrate proteins and provides a physical environment optimized to promote and accelerate protein folding. GroES binds to the apical surface of the GroEL ring, thereby capping the opening of the GroEL channel. This Leptospira borgpetersenii serovar Hardjo-bovis (strain JB197) protein is Co-chaperonin GroES.